A 380-amino-acid polypeptide reads, in one-letter code: MYAPYATMPDRSRGRAVPEEESSFRSPFQRDRDRIIHASAFRRLKHKTQVFVEHEGDNYRTRLTHSIEVGQVARTIAGALGLNQELTEAVALAHDLGHTPFGHTGEDALHEMMAPYGGFDHNAQAIRIVTALERHYAEFDGLNLTWETLEAIAKHNGPVVGELPWALAACNRGIDLELHTHASAEAQVAALADDIAYNHHDLHDGLRAGLFTDDDVCSLSIIAPAYAEVDEIYPGLDHNRRRHEALRRFFGVMVSDVIETSRRKIAASGAQSVEEIRALDHAVVTFSDEIWTQLRELRAFMFTRMYRAPSVMVVRERVAVVVKALFAYYLENTMAMPERWHGDIRKAETETDRARIVSDYIAGMTDRFALQLYDRLALGA.

Positions 1–28 (MYAPYATMPDRSRGRAVPEEESSFRSPF) are disordered. The 137-residue stretch at 62 to 198 (RLTHSIEVGQ…AALADDIAYN (137 aa)) folds into the HD domain.

Belongs to the dGTPase family. Type 2 subfamily.

In Ruegeria sp. (strain TM1040) (Silicibacter sp.), this protein is Deoxyguanosinetriphosphate triphosphohydrolase-like protein.